A 301-amino-acid chain; its full sequence is Oxygen-dependent coproporphyrinogen-III oxidase (301 aa).

Ser-94 contacts substrate. A divalent metal cation-binding residues include His-98 and His-108. The active-site Proton donor is the His-108. 110 to 112 lines the substrate pocket; sequence NVR. A divalent metal cation contacts are provided by His-147 and His-177. Residues 242–277 are important for dimerization; it reads YVEFNLVYDRGTLFGLQSGGRTESILMSMPPLARWE. 260 to 262 contacts substrate; sequence GGR.

It belongs to the aerobic coproporphyrinogen-III oxidase family. Homodimer. A divalent metal cation serves as cofactor.

It is found in the cytoplasm. It carries out the reaction coproporphyrinogen III + O2 + 2 H(+) = protoporphyrinogen IX + 2 CO2 + 2 H2O. It participates in porphyrin-containing compound metabolism; protoporphyrin-IX biosynthesis; protoporphyrinogen-IX from coproporphyrinogen-III (O2 route): step 1/1. In terms of biological role, involved in the heme biosynthesis. Catalyzes the aerobic oxidative decarboxylation of propionate groups of rings A and B of coproporphyrinogen-III to yield the vinyl groups in protoporphyrinogen-IX. In Photobacterium profundum (strain SS9), this protein is Oxygen-dependent coproporphyrinogen-III oxidase.